The chain runs to 680 residues: Probable galacturonosyltransferase 3 (680 aa).

At 1–6 (MTTFST) the chain is on the cytoplasmic side. A helical; Signal-anchor for type II membrane protein membrane pass occupies residues 7 to 27 (CAAFLSLVVVLHAVHVGGAIL). Topologically, residues 28-680 (ESQAPHRELK…PYLRRCDINE (653 aa)) are lumenal. The tract at residues 118-146 (SFQNDTGMEDNASHSTTNQTDESENQFPN) is disordered. N-linked (GlcNAc...) asparagine glycosylation is found at Asn121, Asn128, Asn135, Asn239, Asn386, Asn438, Asn545, Asn578, Asn610, and Asn631. A compositionally biased stretch (polar residues) spans 130-145 (SHSTTNQTDESENQFP).

This sequence belongs to the glycosyltransferase 8 family. As to expression, expressed in roots, inflorescences, siliques, leaves and stems.

It localises to the golgi apparatus membrane. Its pathway is glycan metabolism; pectin biosynthesis. Functionally, may be involved in pectin and/or xylans biosynthesis in cell walls. This Arabidopsis thaliana (Mouse-ear cress) protein is Probable galacturonosyltransferase 3 (GAUT3).